Consider the following 155-residue polypeptide: Small ribosomal subunit protein uS17 (155 aa).

Ala-2 bears the N-acetylalanine mark.

This sequence belongs to the universal ribosomal protein uS17 family.

The sequence is that of Small ribosomal subunit protein uS17 from Drosophila yakuba (Fruit fly).